The primary structure comprises 765 residues: 5-methyltetrahydropteroyltriglutamate--homocysteine methyltransferase (765 aa).

5-methyltetrahydropteroyltri-L-glutamate contacts are provided by residues 18–21 (REWK) and K114. L-homocysteine contacts are provided by residues 437-439 (IGS) and E490. L-methionine is bound by residues 437–439 (IGS) and E490. Residue W567 coordinates 5-methyltetrahydropteroyltri-L-glutamate. L-homocysteine is bound at residue D605. An L-methionine-binding site is contributed by D605. 5-methyltetrahydropteroyltri-L-glutamate is bound at residue E611. Residues H647, C649, and E671 each contribute to the Zn(2+) site. H700 functions as the Proton donor in the catalytic mechanism. Zn(2+) is bound at residue C732.

Belongs to the vitamin-B12 independent methionine synthase family. The cofactor is Zn(2+).

The catalysed reaction is 5-methyltetrahydropteroyltri-L-glutamate + L-homocysteine = tetrahydropteroyltri-L-glutamate + L-methionine. Its pathway is amino-acid biosynthesis; L-methionine biosynthesis via de novo pathway; L-methionine from L-homocysteine (MetE route): step 1/1. In terms of biological role, catalyzes the transfer of a methyl group from 5-methyltetrahydrofolate to homocysteine resulting in methionine formation. This is 5-methyltetrahydropteroyltriglutamate--homocysteine methyltransferase from Listeria monocytogenes serotype 4b (strain F2365).